Here is a 282-residue protein sequence, read N- to C-terminus: Energy-coupling factor transporter ATP-binding protein EcfA2 (282 aa).

The ABC transporter domain occupies 1-234; that stretch reads MKGSPFEKVA…ADELVALGLD (234 aa). Residue 28-35 coordinates ATP; sequence GHTGSGKS.

Belongs to the ABC transporter superfamily. Energy-coupling factor EcfA family. Forms a stable energy-coupling factor (ECF) transporter complex composed of 2 membrane-embedded substrate-binding proteins (S component), 2 ATP-binding proteins (A component) and 2 transmembrane proteins (T component).

The protein localises to the cell membrane. ATP-binding (A) component of a common energy-coupling factor (ECF) ABC-transporter complex. Unlike classic ABC transporters this ECF transporter provides the energy necessary to transport a number of different substrates. In Halalkalibacterium halodurans (strain ATCC BAA-125 / DSM 18197 / FERM 7344 / JCM 9153 / C-125) (Bacillus halodurans), this protein is Energy-coupling factor transporter ATP-binding protein EcfA2.